A 255-amino-acid polypeptide reads, in one-letter code: Aprataxin and PNK-like factor (255 aa).

Residues 1 to 11 show a composition bias toward low complexity; that stretch reads MSATDASTADS. Disordered stretches follow at residues 1-117, 131-168, and 195-255; these read MSAT…VSSS, RRNP…FGNA, and RLRQ…DDYD. Composition is skewed to basic and acidic residues over residues 12–22, 40–64, and 137–150; these read GAKRKSSEDIT, KSEE…KAEP, and RSAE…DYRR. PBZ-type zinc fingers lie at residues 121 to 142 and 161 to 182; these read TSCR…AEAH and PACP…DYSH. Acidic residues predominate over residues 207 to 218; that stretch reads DDSGTDEEDEPF. The segment covering 221–230 has biased composition (basic and acidic residues); the sequence is DNDRDADYRP. The segment covering 234 to 244 has biased composition (acidic residues); that stretch reads INEDEDDELEF.

Belongs to the APLF family.

Functionally, displays apurinic-apyrimidinic (AP) endonuclease and 3'-5' exonuclease activities in vitro. The protein is Aprataxin and PNK-like factor of Drosophila melanogaster (Fruit fly).